We begin with the raw amino-acid sequence, 119 residues long: FAD-linked sulfhydryl oxidase (119 aa).

An ERV/ALR sulfhydryl oxidase domain is found at 1-97 (MLHWGPKFWR…ISWSEYKNIY (97 aa)). A disulfide bridge connects residues Cys-44 and Cys-47.

Belongs to the asfivirus B119L family. Interacts with A151R. Requires FAD as cofactor.

The protein localises to the host cytoplasm. It localises to the virion. It catalyses the reaction 2 R'C(R)SH + O2 = R'C(R)S-S(R)CR' + H2O2. In terms of biological role, FAD-dependent sulfhydryl oxidase that catalyzes the formation of disulfide bonds in viral proteins produced in the cell cytoplasm. Involved in virion maturation. The sequence is that of FAD-linked sulfhydryl oxidase from Ornithodoros (relapsing fever ticks).